The primary structure comprises 306 residues: Embryogenic cell protein 40 (306 aa).

3 disordered regions span residues 1–57 (MADL…ASHG), 80–171 (AATH…GGLG), and 188–306 (GTGI…PTSH). The span at 12–23 (IQLTDQHGNPVQ) shows a compositional bias: polar residues. Low complexity predominate over residues 32 to 44 (VHITGVATTGATT). 3 stretches are compositionally biased toward gly residues: residues 85 to 119 (GSHGGTGTHGVGPTGVGAAHGGTGTTTGLGTGTGT), 127 to 151 (GPTGIGGTHGVGSTGIGGAHGGTGV), and 159 to 171 (GPTGTGAAHGGLG). Residues 194-204 (GSAPASAGSHS) show a composition bias toward low complexity. Composition is skewed to basic and acidic residues over residues 205–218 (HAPEKKTALGEQLH) and 243–259 (KIKEKLGGGKHKKDEHT). Residues 260-278 (TVATTKTTTAAHPGGAAVA) show a composition bias toward low complexity. Residues 279 to 298 (VEHHEHEKKSMLDKIKDKLP) show a composition bias toward basic and acidic residues.

Belongs to the plant dehydrin family.

The polypeptide is Embryogenic cell protein 40 (ECP40) (Daucus carota (Wild carrot)).